The following is a 730-amino-acid chain: Aspyridones cluster regulator apdR (730 aa).

A DNA-binding region (zn(2)-C6 fungal-type) is located at residues 20–46 (CTECRRRKIRCDQATPCRHCEKAALRC).

It is found in the nucleus. Its function is as follows. Transcription factor involved in regulation of gene cluster that mediates the biosynthesis of aspyridones. The chain is Aspyridones cluster regulator apdR from Emericella nidulans (strain FGSC A4 / ATCC 38163 / CBS 112.46 / NRRL 194 / M139) (Aspergillus nidulans).